Reading from the N-terminus, the 265-residue chain is MNQNGDKNEGKLFQLPSLPPWKTPRFNKANFNNFTTPLRKRSTRVINDDSMPITGEVLEERTADDLYGINMDVDEVDYLNTLSHIEEEKQYDYSPFCERNTLRESRIDSFLKAERAAHCLVFHKVGHLDGIDSYRPDIDIMCGEEANKYDSANPEGNGSMLLESVPGCNKEDLERLSRREFVTNSKPNMRRLDDIINHETNALKSFWNDSGLVNSLQSHHLHEEYLLLQEELKNVYKIKCHDRVPIESLRDKCRRHYSNEDSSFL.

The APC/C is composed of at least 13 subunits that stay tightly associated throughout the cell cycle: APC1, APC2, APC4, APC5, APC9, APC11, CDC16, CDC23, CDC26, CDC27, DOC1, MND2 and SWM1.

The protein localises to the cytoplasm. The protein resides in the nucleus. It participates in protein modification; protein ubiquitination. In terms of biological role, component of the anaphase promoting complex/cyclosome (APC/C), a cell cycle-regulated E3 ubiquitin-protein ligase complex that controls progression through mitosis and the G1 phase of the cell cycle. The APC/C is thought to confer substrate specificity and, in the presence of ubiquitin-conjugating E2 enzymes, it catalyzes the formation of protein-ubiquitin conjugates that are subsequently degraded by the 26S proteasome. In early mitosis, the APC/C is activated by CDC20 and targets securin PDS1, the B-type cyclin CLB5, and other anaphase inhibitory proteins for proteolysis, thereby triggering the separation of sister chromatids at the metaphase-to-anaphase transition. In late mitosis and in G1, degradation of CLB5 allows activation of the APC/C by CDH1, which is needed to destroy CDC20 and the B-type cyclin CLB2 to allow exit from mitosis and creating the low CDK state necessary for cytokinesis and for reforming prereplicative complexes in G1 prior to another round of replication. This is Anaphase-promoting complex subunit 9 (APC9) from Saccharomyces cerevisiae (strain ATCC 204508 / S288c) (Baker's yeast).